A 74-amino-acid polypeptide reads, in one-letter code: Small ribosomal subunit protein eS17 (74 aa).

It belongs to the eukaryotic ribosomal protein eS17 family.

This chain is Small ribosomal subunit protein eS17, found in Ignicoccus hospitalis (strain KIN4/I / DSM 18386 / JCM 14125).